The primary structure comprises 269 residues: Hemin import ATP-binding protein HmuV (269 aa).

Positions 5-242 (LDAEAASFAI…SLIRRVFDIA (238 aa)) constitute an ABC transporter domain. An ATP-binding site is contributed by 37–44 (GPNGAGKS).

Belongs to the ABC transporter superfamily. Heme (hemin) importer (TC 3.A.1.14.5) family. As to quaternary structure, the complex is composed of two ATP-binding proteins (HmuV), two transmembrane proteins (HmuU) and a solute-binding protein (HmuT).

The protein resides in the cell inner membrane. Its function is as follows. Part of the ABC transporter complex HmuTUV involved in hemin import. Responsible for energy coupling to the transport system. The chain is Hemin import ATP-binding protein HmuV from Rhodopseudomonas palustris (strain BisB18).